We begin with the raw amino-acid sequence, 527 residues long: Baicalin-beta-D-glucuronidase (527 aa).

A signal peptide spans 1–25 (MGFQVWQKGLCVLCFSLIFICGVIG). Residue E212 is the Proton donor of the active site. Residue E329 is the Nucleophile of the active site.

Belongs to the glycosyl hydrolase 79 family. As to quaternary structure, homotetramer.

It carries out the reaction baicalin + H2O = baicalein + D-glucuronate + H(+). In terms of biological role, beta-glucuronidase involved in the initiation of H(2)O(2) metabolism via the production of baicalein. Unable to use glycyrrhizin, gypsogenin-3-O-D-glucuronide, luteolin-7-O-D-glucoside and apigenin-7-O-D-glucoside as substrates. In Scutellaria baicalensis (Baical skullcap), this protein is Baicalin-beta-D-glucuronidase (SGUS).